Consider the following 186-residue polypeptide: Peptidyl-tRNA hydrolase (186 aa).

Residue tyrosine 14 coordinates tRNA. Histidine 19 serves as the catalytic Proton acceptor. Positions 64, 66, and 112 each coordinate tRNA.

The protein belongs to the PTH family. As to quaternary structure, monomer.

The protein localises to the cytoplasm. It catalyses the reaction an N-acyl-L-alpha-aminoacyl-tRNA + H2O = an N-acyl-L-amino acid + a tRNA + H(+). Its function is as follows. Hydrolyzes ribosome-free peptidyl-tRNAs (with 1 or more amino acids incorporated), which drop off the ribosome during protein synthesis, or as a result of ribosome stalling. In terms of biological role, catalyzes the release of premature peptidyl moieties from peptidyl-tRNA molecules trapped in stalled 50S ribosomal subunits, and thus maintains levels of free tRNAs and 50S ribosomes. This is Peptidyl-tRNA hydrolase from Mesoplasma florum (strain ATCC 33453 / NBRC 100688 / NCTC 11704 / L1) (Acholeplasma florum).